The following is a 369-amino-acid chain: UPF0284 protein AM1_5137 (369 aa).

It belongs to the UPF0284 family.

The sequence is that of UPF0284 protein AM1_5137 from Acaryochloris marina (strain MBIC 11017).